A 249-amino-acid chain; its full sequence is tRNA pseudouridine synthase A (249 aa).

Asp-53 serves as the catalytic Nucleophile. Position 111 (Tyr-111) interacts with substrate.

The protein belongs to the tRNA pseudouridine synthase TruA family. Homodimer.

It carries out the reaction uridine(38/39/40) in tRNA = pseudouridine(38/39/40) in tRNA. Its function is as follows. Formation of pseudouridine at positions 38, 39 and 40 in the anticodon stem and loop of transfer RNAs. The chain is tRNA pseudouridine synthase A from Streptococcus equi subsp. zooepidemicus (strain MGCS10565).